The primary structure comprises 338 residues: DNA-directed RNA polymerase subunit alpha (338 aa).

The interval 1–234 is alpha N-terminal domain (alpha-NTD); it reads MIHKNWAELI…DQLSIFVNFE (234 aa). Residues 250–338 are alpha C-terminal domain (alpha-CTD); it reads FNPLLLKKVD…DLAKRFEDQF (89 aa).

The protein belongs to the RNA polymerase alpha chain family. Homodimer. The RNAP catalytic core consists of 2 alpha, 1 beta, 1 beta' and 1 omega subunit. When a sigma factor is associated with the core the holoenzyme is formed, which can initiate transcription.

It carries out the reaction RNA(n) + a ribonucleoside 5'-triphosphate = RNA(n+1) + diphosphate. Functionally, DNA-dependent RNA polymerase catalyzes the transcription of DNA into RNA using the four ribonucleoside triphosphates as substrates. This Cereibacter sphaeroides (strain ATCC 17025 / ATH 2.4.3) (Rhodobacter sphaeroides) protein is DNA-directed RNA polymerase subunit alpha.